Here is a 268-residue protein sequence, read N- to C-terminus: Stomatin homolog PYRAB06580 (268 aa).

A helical membrane pass occupies residues 1–21 (MILPTNFFVTTIILLFILIFL). 2 coiled-coil regions span residues 125–152 (GQAH…EATD) and 178–213 (KQAE…ISEH).

Belongs to the band 7/mec-2 family. As to quaternary structure, homotrimer.

Its subcellular location is the membrane. This Pyrococcus abyssi (strain GE5 / Orsay) protein is Stomatin homolog PYRAB06580.